Reading from the N-terminus, the 64-residue chain is Large ribosomal subunit protein bL28 (64 aa).

A disordered region spans residues 1 to 23 (MARKDQISHRGPLSGNNRSHALN).

It belongs to the bacterial ribosomal protein bL28 family.

The polypeptide is Large ribosomal subunit protein bL28 (Mesomycoplasma hyopneumoniae (strain 232) (Mycoplasma hyopneumoniae)).